A 420-amino-acid polypeptide reads, in one-letter code: Bone morphogenetic protein 2 (420 aa).

The first 23 residues, 1-23 (MVAVVRSLMVLLLAQVLLEGATG), serve as a signal peptide directing secretion. Positions 24-303 (LIPEVGRRRY…DSVLHTREKR (280 aa)) are excised as a propeptide. 5 N-linked (GlcNAc...) asparagine glycosylation sites follow: N138, N167, N168, N172, and N362. Intrachain disulfides connect C320–C385, C349–C417, and C353–C419.

Belongs to the TGF-beta family. In terms of assembly, homodimer; disulfide-linked.

It is found in the secreted. In terms of biological role, induces cartilage and bone formation. This is Bone morphogenetic protein 2 (bmp2) from Tetraodon nigroviridis (Spotted green pufferfish).